The sequence spans 475 residues: Putative aldehyde dehydrogenase SERP1729 (475 aa).

201–207 (GDGSGVG) serves as a coordination point for NAD(+). Residues Glu245 and Cys279 contribute to the active site.

The protein belongs to the aldehyde dehydrogenase family.

It catalyses the reaction an aldehyde + NAD(+) + H2O = a carboxylate + NADH + 2 H(+). This chain is Putative aldehyde dehydrogenase SERP1729, found in Staphylococcus epidermidis (strain ATCC 35984 / DSM 28319 / BCRC 17069 / CCUG 31568 / BM 3577 / RP62A).